The primary structure comprises 1430 residues: Transport and Golgi organization protein 1 (1430 aa).

The N-terminal stretch at 1-34 (MRLTNEKATMQPQLSDLALVLGLLICCLPTLTWA) is a signal peptide. Residues 35–796 (ATLSDKRLCA…ADKLVDHSQL (762 aa)) are Extracellular-facing. Residues 50–112 (QIISMGIAKI…NKDFIMEKKI (63 aa)) enclose the SH3 domain. Disordered regions lie at residues 253-272 (QEEP…PPLP), 284-303 (DFDY…SQDN), 318-362 (ESIE…SLPT), 445-524 (SDAE…DQQK), and 568-673 (EEAE…TDNH). Residues 284 to 296 (DFDYGDDETDDDS) are compositionally biased toward acidic residues. Composition is skewed to basic and acidic residues over residues 331-357 (KKTD…KQED), 497-524 (LQEE…DQQK), and 568-588 (EEAE…RSSE). The stretch at 494-620 (YKQLQEEQEK…QSNEIVDNNN (127 aa)) forms a coiled coil. Polar residues predominate over residues 594-621 (LSVQEANMQQLNDSVDSQSNEIVDNNNR). The span at 640-651 (HPSTASHTTPTP) shows a compositional bias: low complexity. A helical membrane pass occupies residues 797–817 (LLCVVIAAISSLFFMFAYYCF). The Cytoplasmic portion of the chain corresponds to 818-1430 (CNSSQEGALL…SATSRPYSEV (613 aa)). A phosphoserine mark is found at S865 and S868. Positions 869–1245 (NDMVADLKKQ…SLRRKLTTMA (377 aa)) form a coiled coil. A compositionally biased stretch (low complexity) spans 1105-1114 (SQLQQSSQDV). 2 disordered regions span residues 1105–1126 (SQLQ…QSER) and 1312–1430 (LPPT…YSEV). Positions 1115-1126 (EQLKQDFNQSER) are enriched in basic and acidic residues. Positions 1321–1334 (RPPPLGRMRSPPPS) are enriched in pro residues. Positions 1336–1346 (RGDRDRERYSD) are enriched in basic and acidic residues. 2 positions are modified to phosphoserine: S1345 and S1348. Over residues 1348-1361 (SDYDDYDDDEEDDR) the composition is skewed to acidic residues. The span at 1364–1380 (DRRRRHSGSWGRRHRGS) shows a compositional bias: basic residues. Residues 1387–1402 (TYRSLSPSDSRYNYND) are compositionally biased toward polar residues. A phosphoserine mark is found at S1390 and S1392. A compositionally biased stretch (pro residues) spans 1408-1417 (SPPPSPPPVP). Residues 1420 to 1430 (RSATSRPYSEV) show a composition bias toward polar residues.

It belongs to the MIA/OTOR family. Tango1 subfamily.

The protein resides in the golgi apparatus membrane. The protein localises to the golgi apparatus. It localises to the trans-Golgi network. Functionally, required for protein secretion. May participate in cargo loading by binding to COPII coat subunits and guiding SH3-bound proteins into a growing carrier. At basal transitional ER sites in follicle epithelial cells, mediates the exit of basal membrane protein such as vkg, LanB1 and Trol, from the endoplasmic reticulum (ER) to basal Golgi clusters. This is Transport and Golgi organization protein 1 from Drosophila melanogaster (Fruit fly).